Reading from the N-terminus, the 261-residue chain is uncharacterized protein (261 aa).

Positions 1–22 are cleaved as a signal peptide; that stretch reads MGYSKRFALYISVMILIFAIAG. The N-palmitoyl cysteine moiety is linked to residue Cys-23. Cys-23 carries the S-diacylglycerol cysteine lipid modification.

It belongs to the staphylococcal tandem lipoprotein family.

The protein localises to the cell membrane. This is an uncharacterized protein from Staphylococcus aureus (strain N315).